The sequence spans 492 residues: Ketol-acid reductoisomerase (NADP(+)) (492 aa).

The region spanning 15-208 (AQLGQCRFMD…GGDRAGVLQS (194 aa)) is the KARI N-terminal Rossmann domain. NADP(+) contacts are provided by residues 45-48 (CGAQ), arginine 68, arginine 76, serine 78, and 108-110 (DKQ). Histidine 132 is an active-site residue. Glycine 158 lines the NADP(+) pocket. 2 KARI C-terminal knotted domains span residues 209-353 (SFIA…DEQT) and 354-486 (YFDK…MTDM). Mg(2+) is bound by residues aspartate 217, glutamate 221, glutamate 389, and glutamate 393. Residue serine 414 participates in substrate binding.

This sequence belongs to the ketol-acid reductoisomerase family. The cofactor is Mg(2+).

The enzyme catalyses (2R)-2,3-dihydroxy-3-methylbutanoate + NADP(+) = (2S)-2-acetolactate + NADPH + H(+). It carries out the reaction (2R,3R)-2,3-dihydroxy-3-methylpentanoate + NADP(+) = (S)-2-ethyl-2-hydroxy-3-oxobutanoate + NADPH + H(+). The protein operates within amino-acid biosynthesis; L-isoleucine biosynthesis; L-isoleucine from 2-oxobutanoate: step 2/4. Its pathway is amino-acid biosynthesis; L-valine biosynthesis; L-valine from pyruvate: step 2/4. In terms of biological role, involved in the biosynthesis of branched-chain amino acids (BCAA). Catalyzes an alkyl-migration followed by a ketol-acid reduction of (S)-2-acetolactate (S2AL) to yield (R)-2,3-dihydroxy-isovalerate. In the isomerase reaction, S2AL is rearranged via a Mg-dependent methyl migration to produce 3-hydroxy-3-methyl-2-ketobutyrate (HMKB). In the reductase reaction, this 2-ketoacid undergoes a metal-dependent reduction by NADPH to yield (R)-2,3-dihydroxy-isovalerate. This Shewanella oneidensis (strain ATCC 700550 / JCM 31522 / CIP 106686 / LMG 19005 / NCIMB 14063 / MR-1) protein is Ketol-acid reductoisomerase (NADP(+)).